Consider the following 344-residue polypeptide: uncharacterized protein (344 aa).

Residues Arg242–Arg343 form the HTH araC/xylS-type domain. DNA-binding regions (H-T-H motif) lie at residues Thr263–Gly284 and Val310–Tyr333.

This is an uncharacterized protein from Mycobacterium bovis (strain ATCC BAA-935 / AF2122/97).